The primary structure comprises 180 residues: Signal peptidase complex subunit 3 (180 aa).

Residues 1–12 (MHNLLSRANALL) are Cytoplasmic-facing. The chain crosses the membrane as a helical; Signal-anchor for type II membrane protein span at residues 13 to 33 (AFTLWVMAAVTAACFLSTVFL). Over 34–180 (DYTVPTKLTV…PTTYTTTRRS (147 aa)) the chain is Lumenal. Asn-141 is a glycosylation site (N-linked (GlcNAc...) asparagine).

It belongs to the SPCS3 family. Component of the signal peptidase complex (SPC) composed of a catalytic subunit sec-11 and three accessory subunits spcs-1, spcs-2 and spcs-3. The complex induces a local thinning of the ER membrane which is used to measure the length of the signal peptide (SP) h-region of protein substrates. This ensures the selectivity of the complex towards h-regions shorter than 18-20 amino acids.

It localises to the endoplasmic reticulum membrane. Functionally, essential component of the signal peptidase complex (SPC) which catalyzes the cleavage of N-terminal signal sequences from nascent proteins as they are translocated into the lumen of the endoplasmic reticulum. Essential for the SPC catalytic activity, possibly by stabilizing and positioning the active center of the complex close to the lumenal surface. The protein is Signal peptidase complex subunit 3 of Caenorhabditis elegans.